Reading from the N-terminus, the 1406-residue chain is DNA-directed RNA polymerase subunit beta' (1406 aa).

Zn(2+) is bound by residues Cys-70, Cys-72, Cys-85, and Cys-88. Mg(2+) is bound by residues Asp-460, Asp-462, and Asp-464. Residues Cys-814, Cys-889, Cys-896, and Cys-899 each coordinate Zn(2+).

Belongs to the RNA polymerase beta' chain family. The RNAP catalytic core consists of 2 alpha, 1 beta, 1 beta' and 1 omega subunit. When a sigma factor is associated with the core the holoenzyme is formed, which can initiate transcription. It depends on Mg(2+) as a cofactor. Zn(2+) is required as a cofactor.

The catalysed reaction is RNA(n) + a ribonucleoside 5'-triphosphate = RNA(n+1) + diphosphate. Functionally, DNA-dependent RNA polymerase catalyzes the transcription of DNA into RNA using the four ribonucleoside triphosphates as substrates. In Psychromonas ingrahamii (strain DSM 17664 / CCUG 51855 / 37), this protein is DNA-directed RNA polymerase subunit beta'.